Here is a 135-residue protein sequence, read N- to C-terminus: Protein Wnt-7a (135 aa).

Intrachain disulfides connect cysteine 3–cysteine 17 and cysteine 5–cysteine 12. Residue serine 9 is the site of O-palmitoleoyl serine; by PORCN attachment. The interval 41 to 69 (VEPVRASRNKRPTFLKIKKPLSYRKPMDT) is disordered linker. 4 disulfides stabilise this stretch: cysteine 81/cysteine 112, cysteine 97/cysteine 107, cysteine 111/cysteine 134, and cysteine 130/cysteine 131. Asparagine 98 carries an N-linked (GlcNAc...) asparagine glycan.

This sequence belongs to the Wnt family. Palmitoleoylation is required for efficient binding to frizzled receptors. Depalmitoleoylation leads to Wnt signaling pathway inhibition. In embryo, in brain and ventral neural tube; in adults, in brain.

The protein localises to the secreted. Its subcellular location is the extracellular space. It localises to the extracellular matrix. In terms of biological role, ligand for members of the frizzled family of seven transmembrane receptors that functions in the canonical Wnt/beta-catenin signaling pathway. Plays an important role in embryonic development, including dorsal versus ventral patterning during limb development, skeleton development and urogenital tract development. Required for central nervous system (CNS) angiogenesis and blood-brain barrier regulation. This chain is Protein Wnt-7a (wnt7a), found in Xenopus laevis (African clawed frog).